We begin with the raw amino-acid sequence, 227 residues long: Cytidylate kinase (227 aa).

11–19 (GPSGAGKGT) contacts ATP.

The protein belongs to the cytidylate kinase family. Type 1 subfamily.

It localises to the cytoplasm. It catalyses the reaction CMP + ATP = CDP + ADP. The catalysed reaction is dCMP + ATP = dCDP + ADP. The sequence is that of Cytidylate kinase from Pasteurella multocida (strain Pm70).